We begin with the raw amino-acid sequence, 1336 residues long: Putative botulinum-like toxin Wo (1336 aa).

The has protease activity stretch occupies residues 1–476; it reads MDVLEMFDVN…VAGMQRMVSL (476 aa). A Zn(2+)-binding site is contributed by His-250. The active site involves Glu-251. Positions 254 and 296 each coordinate Zn(2+).

This sequence belongs to the peptidase M27 family. Zn(2+) is required as a cofactor.

It catalyses the reaction Limited hydrolysis of proteins of the neuroexocytosis apparatus, synaptobrevins, SNAP25 or syntaxin. No detected action on small molecule substrates.. With respect to regulation, inhibited by EDTA and 1,10-phenanthroline. Functionally, when overexpressed the N-terminus (residues 1-476) cleaves rat synaptobrevin-2/VAMP2 between '89-Trp-|-Trp-90' in vitro. This releases the cytoplasmic domain of VAMP2 from the synaptic vesicle membrane, which would prevent the assembly of the trans-SNARE complex on the membrane and thus prevent vesicle-target membrane fusion and neurotransmitter release. This is Putative botulinum-like toxin Wo from Weissella oryzae (strain DSM 25784 / JCM 18191 / LMG 30913 / SG25).